Here is a 512-residue protein sequence, read N- to C-terminus: Apolipoprotein N-acyltransferase (512 aa).

Helical transmembrane passes span 5–25 (LDKYWQHPALYWPLLILFAAA), 56–76 (FAVSSAYLFGLTAYTTQFYWI), 92–112 (VPLTFLLPAYLALYPALCFWL), 118–138 (LPRGIKIGLVLPILWTLTEFA), 168–188 (LGGIHMVTLATAFLGVWLVLA), and 195–215 (SGKRLLPIILIAALLAAGYTA). In terms of domain architecture, CN hydrolase spans 233-477 (LQGNIDQTLK…ETVLEGHIKG (245 aa)). The Proton acceptor role is filled by Glu-271. Lys-337 is an active-site residue. Cys-389 serves as the catalytic Nucleophile. A helical transmembrane segment spans residues 487–507 (TGSSWWLMGILALAALILFIF).

Belongs to the CN hydrolase family. Apolipoprotein N-acyltransferase subfamily.

Its subcellular location is the cell inner membrane. It carries out the reaction N-terminal S-1,2-diacyl-sn-glyceryl-L-cysteinyl-[lipoprotein] + a glycerophospholipid = N-acyl-S-1,2-diacyl-sn-glyceryl-L-cysteinyl-[lipoprotein] + a 2-acyl-sn-glycero-3-phospholipid + H(+). It functions in the pathway protein modification; lipoprotein biosynthesis (N-acyl transfer). In terms of biological role, catalyzes the phospholipid dependent N-acylation of the N-terminal cysteine of apolipoprotein, the last step in lipoprotein maturation. This Neisseria meningitidis serogroup B (strain ATCC BAA-335 / MC58) protein is Apolipoprotein N-acyltransferase.